Consider the following 158-residue polypeptide: NADH-quinone oxidoreductase subunit B (158 aa).

4 residues coordinate [4Fe-4S] cluster: Cys-37, Cys-38, Cys-102, and Cys-132.

The protein belongs to the complex I 20 kDa subunit family. NDH-1 is composed of 14 different subunits. Subunits NuoB, C, D, E, F, and G constitute the peripheral sector of the complex. The cofactor is [4Fe-4S] cluster.

It is found in the cell inner membrane. The enzyme catalyses a quinone + NADH + 5 H(+)(in) = a quinol + NAD(+) + 4 H(+)(out). NDH-1 shuttles electrons from NADH, via FMN and iron-sulfur (Fe-S) centers, to quinones in the respiratory chain. Couples the redox reaction to proton translocation (for every two electrons transferred, four hydrogen ions are translocated across the cytoplasmic membrane), and thus conserves the redox energy in a proton gradient. The sequence is that of NADH-quinone oxidoreductase subunit B from Bordetella avium (strain 197N).